We begin with the raw amino-acid sequence, 87 residues long: Small ribosomal subunit protein bS20 (87 aa).

Over residues 1–19 (MANHKSALKRHRQSIKRNL) the composition is skewed to basic residues. Positions 1–22 (MANHKSALKRHRQSIKRNLRNN) are disordered.

The protein belongs to the bacterial ribosomal protein bS20 family.

Binds directly to 16S ribosomal RNA. The protein is Small ribosomal subunit protein bS20 of Maridesulfovibrio salexigens (strain ATCC 14822 / DSM 2638 / NCIMB 8403 / VKM B-1763) (Desulfovibrio salexigens).